Here is a 378-residue protein sequence, read N- to C-terminus: Queuine tRNA-ribosyltransferase (378 aa).

Aspartate 91 functions as the Proton acceptor in the catalytic mechanism. Residues aspartate 91–phenylalanine 95, aspartate 145, glutamine 189, and glycine 216 each bind substrate. The interval glycine 247–aspartate 253 is RNA binding. Aspartate 266 acts as the Nucleophile in catalysis. The interval threonine 271 to arginine 275 is RNA binding; important for wobble base 34 recognition. Residues cysteine 304, cysteine 306, cysteine 309, and histidine 335 each contribute to the Zn(2+) site.

It belongs to the queuine tRNA-ribosyltransferase family. As to quaternary structure, homodimer. Within each dimer, one monomer is responsible for RNA recognition and catalysis, while the other monomer binds to the replacement base PreQ1. Zn(2+) serves as cofactor.

It catalyses the reaction 7-aminomethyl-7-carbaguanine + guanosine(34) in tRNA = 7-aminomethyl-7-carbaguanosine(34) in tRNA + guanine. Its pathway is tRNA modification; tRNA-queuosine biosynthesis. Functionally, catalyzes the base-exchange of a guanine (G) residue with the queuine precursor 7-aminomethyl-7-deazaguanine (PreQ1) at position 34 (anticodon wobble position) in tRNAs with GU(N) anticodons (tRNA-Asp, -Asn, -His and -Tyr). Catalysis occurs through a double-displacement mechanism. The nucleophile active site attacks the C1' of nucleotide 34 to detach the guanine base from the RNA, forming a covalent enzyme-RNA intermediate. The proton acceptor active site deprotonates the incoming PreQ1, allowing a nucleophilic attack on the C1' of the ribose to form the product. After dissociation, two additional enzymatic reactions on the tRNA convert PreQ1 to queuine (Q), resulting in the hypermodified nucleoside queuosine (7-(((4,5-cis-dihydroxy-2-cyclopenten-1-yl)amino)methyl)-7-deazaguanosine). In Vibrio atlanticus (strain LGP32) (Vibrio splendidus (strain Mel32)), this protein is Queuine tRNA-ribosyltransferase.